The following is a 166-amino-acid chain: UPF0134 protein MPN_138 (166 aa).

The protein belongs to the UPF0134 family.

This is UPF0134 protein MPN_138 from Mycoplasma pneumoniae (strain ATCC 29342 / M129 / Subtype 1) (Mycoplasmoides pneumoniae).